Consider the following 449-residue polypeptide: CCAAT/enhancer-binding protein (449 aa).

Disordered stretches follow at residues 211-233 (HATYNNSSDENSSVGSDSSTIKE), 276-302 (GNPLNGGNTTPSSNGSNGSTGSSNGSQ), and 334-386 (SKLH…KAKV). Composition is skewed to low complexity over residues 215 to 229 (NNSSDENSSVGSDSS), 280 to 301 (NGGNTTPSSNGSNGSTGSSNGS), and 339 to 349 (QQQHQQHQQQQ). Residues 357 to 368 (KHVDKGTDEYRR) show a composition bias toward basic and acidic residues. The bZIP domain maps to 363-426 (TDEYRRRRER…QLHKQIYMQL (64 aa)). Residues 367 to 396 (RRRRERNNIAVRKSREKAKVRSREVEERVK) form a basic motif region. Residues 398 to 405 (LLKEKDAL) are leucine-zipper.

This sequence belongs to the bZIP family. C/EBP subfamily. In terms of assembly, binds DNA as a dimer and can form stable heterodimers. Interacts with trbl. Post-translationally, ubiquitination/deubiquitination regulates border cell migration. Ubiquitination is stimulated by trbl, which leads to proteasomal degradation and inhibits border cell migration. Deubiquitination by Usp47, leads to its stabilization and promotes border cell migration.

The protein resides in the nucleus. In terms of biological role, required for the expression of gene products mediating border cell migration. Among the DNA sequences that this protein binds with high affinity is a conserved site within the promoter of its gene. In Drosophila melanogaster (Fruit fly), this protein is CCAAT/enhancer-binding protein (slbo).